Reading from the N-terminus, the 201-residue chain is 3-isopropylmalate dehydratase small subunit (201 aa).

It belongs to the LeuD family. LeuD type 1 subfamily. In terms of assembly, heterodimer of LeuC and LeuD.

The catalysed reaction is (2R,3S)-3-isopropylmalate = (2S)-2-isopropylmalate. The protein operates within amino-acid biosynthesis; L-leucine biosynthesis; L-leucine from 3-methyl-2-oxobutanoate: step 2/4. Functionally, catalyzes the isomerization between 2-isopropylmalate and 3-isopropylmalate, via the formation of 2-isopropylmaleate. The chain is 3-isopropylmalate dehydratase small subunit from Methylorubrum populi (strain ATCC BAA-705 / NCIMB 13946 / BJ001) (Methylobacterium populi).